The following is a 379-amino-acid chain: MEQELRSIPASKLDQFIEVHLPDISFRDELREVIDVLCILLKNRCCRESSHPVRTSKVGKGGSSRKGTTLKGWSDADLVVFLDSFTCFGDQLNRRGEFTKEIKKLLFEVQRDRHIGVKIEVHSSWSPNHRALSFKLSAPDQQKEVKFDVLPAYDLLGHVCIPRKPNPQFYANLISERTSLGKEDEFSTCFTELQLYFLNWRPTKLKSLIRLVKHWYQLCKEKLGDPLPPQYALELLTIYAWERGGRLTKFNTAQGFRTVLELITKYKQLLIYWTVCYDFQHPEVSKYLRRQLKKPRPVILDPANPTGNIAGSNPKGWRRLAGEAAAWLRYPCFKYKDGFPVCPWDVPTEVDIPSQNYFFHIICLIFWLLLRLIFGKHSV.

Residues 1 to 355 (MEQELRSIPA…VPTEVDIPSQ (355 aa)) are Cytoplasmic-facing. The helical; Anchor for type IV membrane protein transmembrane segment at 356–374 (NYFFHIICLIFWLLLRLIF) threads the bilayer. The Extracellular portion of the chain corresponds to 375-379 (GKHSV).

Belongs to the 2-5A synthase family. Interacts with OSBPL1A and ABCF3. Highly expressed in the brain, liver, spleen and heart.

The protein localises to the endoplasmic reticulum membrane. Does not have 2'-5'-OAS activity, but can bind double-stranded RNA. Displays antiviral activity against viruses via an alternative antiviral pathway independent of RNase L. The protein is Inactive 2'-5'-oligoadenylate synthase 1B (Oas1b) of Rattus norvegicus (Rat).